Consider the following 391-residue polypeptide: Phosphoglycerate kinase (391 aa).

Substrate is bound by residues 23–25 (DFN), Arg-38, 61–64 (HLGK), Arg-117, and Arg-150. Residues Lys-201, Gly-291, Glu-322, and 348–351 (GGDS) each bind ATP.

The protein belongs to the phosphoglycerate kinase family. As to quaternary structure, monomer.

The protein resides in the cytoplasm. It carries out the reaction (2R)-3-phosphoglycerate + ATP = (2R)-3-phospho-glyceroyl phosphate + ADP. It participates in carbohydrate degradation; glycolysis; pyruvate from D-glyceraldehyde 3-phosphate: step 2/5. The chain is Phosphoglycerate kinase from Clostridium beijerinckii (strain ATCC 51743 / NCIMB 8052) (Clostridium acetobutylicum).